The chain runs to 123 residues: ALWQFNGMIKCKIPSSEPLLDFNNYGCYCGLGGSGTPVDDLDRCCQTHDNCYKQAKKLDSCKVLVDNPYTNSYSYSCSNKQITCSSENNACEAFICNCDRNAAICFSEVPYNNEHKNLDKKYC.

Disulfide bonds link C11/C77, C27/C123, C29/C45, C44/C105, C51/C98, C61/C91, and C84/C96. Ca(2+) is bound by residues Y28, G30, and G32. Residue H48 is part of the active site. Position 49 (D49) interacts with Ca(2+). D99 is a catalytic residue.

It belongs to the phospholipase A2 family. Monomer or homodimer. The cofactor is Ca(2+). Post-translationally, activated by trypsin cleavage in the duodenum. Can also be activated by thrombin or autocatalytically.

It localises to the secreted. The catalysed reaction is a 1,2-diacyl-sn-glycero-3-phosphocholine + H2O = a 1-acyl-sn-glycero-3-phosphocholine + a fatty acid + H(+). The enzyme catalyses 1,2-ditetradecanoyl-sn-glycero-3-phosphocholine + H2O = 1-tetradecanoyl-sn-glycero-3-phosphocholine + tetradecanoate + H(+). It catalyses the reaction 1,2-dihexadecanoyl-sn-glycero-3-phosphocholine + H2O = 1-hexadecanoyl-sn-glycero-3-phosphocholine + hexadecanoate + H(+). It carries out the reaction 1-hexadecanoyl-2-(9Z-octadecenoyl)-sn-glycero-3-phosphocholine + H2O = 1-hexadecanoyl-sn-glycero-3-phosphocholine + (9Z)-octadecenoate + H(+). The catalysed reaction is 1-hexadecanoyl-2-(5Z,8Z,11Z,14Z-eicosatetraenoyl)-sn-glycero-3-phosphocholine + H2O = 1-hexadecanoyl-sn-glycero-3-phosphocholine + (5Z,8Z,11Z,14Z)-eicosatetraenoate + H(+). The enzyme catalyses 1-hexadecanoyl-2-(9Z-octadecenoyl)-sn-glycero-3-phospho-(1'-sn-glycerol) + H2O = 1-hexadecanoyl-sn-glycero-3-phospho-(1'-sn-glycerol) + (9Z)-octadecenoate + H(+). It catalyses the reaction N-hexadecanoyl-1,2-di-(9Z-octadecenoyl)-sn-glycero-3-phosphoethanolamine + H2O = N-hexadecanoyl-1-(9Z-octadecenoyl)-sn-glycero-3-phosphoethanolamine + (9Z)-octadecenoate + H(+). It carries out the reaction 1-hexadecanoyl-2-(9Z,12Z-octadecadienoyl)-sn-glycero-3-phosphoethanolamine + H2O = 1-hexadecanoyl-sn-glycero-3-phosphoethanolamine + (9Z,12Z)-octadecadienoate + H(+). The catalysed reaction is N,1-dihexadecanoyl-2-(9Z,12Z-octadecadienoyl)-sn-glycero-3-phosphoethanolamine + H2O = N,1-dihexadecanoyl-sn-glycero-3-phosphoethanolamine + (9Z,12Z)-octadecadienoate + H(+). In terms of biological role, secretory calcium-dependent phospholipase A2 that primarily targets dietary phospholipids in the intestinal tract. Hydrolyzes the ester bond of the fatty acyl group attached at sn-2 position of phospholipids (phospholipase A2 activity) with preference for phosphatidylethanolamines and phosphatidylglycerols over phosphatidylcholines. May play a role in the biosynthesis of N-acyl ethanolamines that regulate energy metabolism and inflammation in the intestinal tract. Hydrolyzes N-acyl phosphatidylethanolamines to N-acyl lysophosphatidylethanolamines, which are further cleaved by a lysophospholipase D to release N-acyl ethanolamines. May act in an autocrine and paracrine manner. Has anti-helminth activity in a process regulated by gut microbiota. Upon helminth infection of intestinal epithelia, directly affects phosphatidylethanolamine contents in the membrane of helminth larvae, likely controlling an array of phospholipid-mediated cellular processes such as membrane fusion and cell division while providing for better immune recognition, ultimately reducing larvae integrity and infectivity. This Ovis aries (Sheep) protein is Phospholipase A2 (PLA2G1B).